A 672-amino-acid chain; its full sequence is DNA ligase (672 aa).

NAD(+)-binding positions include 32-36 (DAEYD), 81-82 (SL), and E113. The N6-AMP-lysine intermediate role is filled by K115. Residues R136, E173, K290, and K314 each coordinate NAD(+). Zn(2+)-binding residues include C408, C411, C426, and C432. The BRCT domain maps to 594–672 (EIDSPFAGKT…EAEMLRLLGE (79 aa)).

It belongs to the NAD-dependent DNA ligase family. LigA subfamily. Mg(2+) serves as cofactor. Mn(2+) is required as a cofactor.

The enzyme catalyses NAD(+) + (deoxyribonucleotide)n-3'-hydroxyl + 5'-phospho-(deoxyribonucleotide)m = (deoxyribonucleotide)n+m + AMP + beta-nicotinamide D-nucleotide.. Functionally, DNA ligase that catalyzes the formation of phosphodiester linkages between 5'-phosphoryl and 3'-hydroxyl groups in double-stranded DNA using NAD as a coenzyme and as the energy source for the reaction. It is essential for DNA replication and repair of damaged DNA. The polypeptide is DNA ligase (Cronobacter sakazakii (strain ATCC BAA-894) (Enterobacter sakazakii)).